The sequence spans 25 residues: ATP synthase subunit alpha, mitochondrial (25 aa).

Belongs to the ATPase alpha/beta chains family. In terms of assembly, F-type ATPases have 2 components, CF(1) - the catalytic core - and CF(0) - the membrane proton channel. CF(1) has five subunits: alpha(3), beta(3), gamma(1), delta(1), epsilon(1). CF(0) has three main subunits: a, b and c.

Its subcellular location is the mitochondrion. It is found in the mitochondrion inner membrane. In terms of biological role, mitochondrial membrane ATP synthase (F(1)F(0) ATP synthase or Complex V) produces ATP from ADP in the presence of a proton gradient across the membrane which is generated by electron transport complexes of the respiratory chain. F-type ATPases consist of two structural domains, F(1) - containing the extramembraneous catalytic core, and F(0) - containing the membrane proton channel, linked together by a central stalk and a peripheral stalk. During catalysis, ATP synthesis in the catalytic domain of F(1) is coupled via a rotary mechanism of the central stalk subunits to proton translocation. Subunits alpha and beta form the catalytic core in F(1). Rotation of the central stalk against the surrounding alpha(3)beta(3) subunits leads to hydrolysis of ATP in three separate catalytic sites on the beta subunits. Subunit alpha does not bear the catalytic high-affinity ATP-binding sites. The sequence is that of ATP synthase subunit alpha, mitochondrial (ATPA) from Spinacia oleracea (Spinach).